Reading from the N-terminus, the 841-residue chain is Neuronal tyrosine-phosphorylated phosphoinositide-3-kinase adapter 1 (841 aa).

5 disordered regions span residues 1–45 (MNLL…PGVR), 64–448 (PASQ…PAAL), 655–679 (RAWNGSAEGPGKVEREDRGPGTSGI), 745–769 (RPCSQPRDALSQPHPALPLPLPLPP), and 812–833 (LPSWRRGPEPRKSGTPPCRRQH). Residues 8-25 (TKLEWRQHKEEEAKRSSS) are compositionally biased toward basic and acidic residues. The segment covering 26-39 (KEVAPAGSAGPAAG) has biased composition (low complexity). Positions 76–186 (SAMAPRSLSC…DESCPPGPSP (111 aa)) are involved in CYFIP1- and NCKAP1-binding. Gly residues predominate over residues 94-103 (VGGGPGGASG). Basic residues predominate over residues 114-123 (PPAKPRRHPS). Residues 167-176 (SPNTQLSVSF) show a composition bias toward polar residues. Residues 224 to 243 (FRGGGRSGGGLAGPPLGGGG) are compositionally biased toward gly residues. Acidic residues predominate over residues 252 to 261 (SDSEESEAIY). The span at 279–295 (GPPPLTATSPPQQPHAL) shows a compositional bias: pro residues. The span at 759–769 (PALPLPLPLPP) shows a compositional bias: pro residues.

Belongs to the NYAP family. Interacts with ACOT9, ARHGAP26 and PIK3R2. Interacts with components of the WAVE1 complex, CYFIP1 and NCKAP1; this interaction mediates PI3K-WAVE1 association and actin cytoskeleton remodeling. Phosphorylated on tyrosine residues by FYN upon stimulation with CNTN5.

Its function is as follows. Activates PI3K and concomitantly recruits the WAVE1 complex to the close vicinity of PI3K and regulates neuronal morphogenesis. This Homo sapiens (Human) protein is Neuronal tyrosine-phosphorylated phosphoinositide-3-kinase adapter 1 (NYAP1).